The sequence spans 187 residues: ATP synthase subunit delta (187 aa).

It belongs to the ATPase delta chain family. In terms of assembly, F-type ATPases have 2 components, F(1) - the catalytic core - and F(0) - the membrane proton channel. F(1) has five subunits: alpha(3), beta(3), gamma(1), delta(1), epsilon(1). F(0) has three main subunits: a(1), b(2) and c(10-14). The alpha and beta chains form an alternating ring which encloses part of the gamma chain. F(1) is attached to F(0) by a central stalk formed by the gamma and epsilon chains, while a peripheral stalk is formed by the delta and b chains.

The protein resides in the cell membrane. Functionally, f(1)F(0) ATP synthase produces ATP from ADP in the presence of a proton or sodium gradient. F-type ATPases consist of two structural domains, F(1) containing the extramembraneous catalytic core and F(0) containing the membrane proton channel, linked together by a central stalk and a peripheral stalk. During catalysis, ATP synthesis in the catalytic domain of F(1) is coupled via a rotary mechanism of the central stalk subunits to proton translocation. This protein is part of the stalk that links CF(0) to CF(1). It either transmits conformational changes from CF(0) to CF(1) or is implicated in proton conduction. This chain is ATP synthase subunit delta, found in Mesomycoplasma hyopneumoniae (strain J / ATCC 25934 / NCTC 10110) (Mycoplasma hyopneumoniae).